Here is a 334-residue protein sequence, read N- to C-terminus: Sulfhydrogenase 2 subunit beta (334 aa).

4Fe-4S ferredoxin-type domains lie at 220–250 (KVWKKYAEKCLGCGNCTIVCPTCRCYEVCDT) and 294–328 (CKNYFDPEAGFNCVGCGRCDEFCPARIEHVKVLDE). Residues Cys-229, Cys-232, Cys-235, Cys-239, Cys-306, Cys-309, Cys-312, and Cys-316 each coordinate [4Fe-4S] cluster.

Dimer of heterotetramer of alpha, beta, gamma and delta subunits. The nickel-containing alpha and delta subunits constitute the hydrogenase activity. The beta and gamma subunits (flavin-containing dimer) constitute the sulfur reductase activity. [4Fe-4S] cluster is required as a cofactor.

It is found in the cytoplasm. The enzyme catalyses n sulfur + H2 = (n-1) sulfur + hydrogen sulfide + H(+). Part of a bifunctional enzyme complex that functions as a hydrogen-evolving hydrogenase with sulfur-reducing activity. May play a role in hydrogen cycling during fermentative growth. Activity exhibited with NAD in addition to NADPH. The beta and gamma subunits form the sulfur-reducing component that catalyzes the cytoplasmic production of hydrogen sulfide in the presence of elemental sulfur. This is Sulfhydrogenase 2 subunit beta from Pyrococcus furiosus (strain ATCC 43587 / DSM 3638 / JCM 8422 / Vc1).